The chain runs to 598 residues: Arginine--tRNA ligase (598 aa).

The 'HIGH' region signature appears at 139–149 (ANPTGPMHVGH).

The protein belongs to the class-I aminoacyl-tRNA synthetase family. In terms of assembly, monomer.

The protein resides in the cytoplasm. It catalyses the reaction tRNA(Arg) + L-arginine + ATP = L-arginyl-tRNA(Arg) + AMP + diphosphate. In Bradyrhizobium sp. (strain BTAi1 / ATCC BAA-1182), this protein is Arginine--tRNA ligase.